The chain runs to 415 residues: Lipoyl synthase, mitochondrial (415 aa).

The transit peptide at 1–32 (MAASTNRLRFLYSSARTVPQTGSITPISRRTY) directs the protein to the mitochondrion. Residues 20 to 32 (QTGSITPISRRTY) are compositionally biased toward polar residues. Residues 20–53 (QTGSITPISRRTYATTEPSPSATGAPATARKRTN) are disordered. Low complexity predominate over residues 33–47 (ATTEPSPSATGAPAT). [4Fe-4S] cluster-binding residues include cysteine 132, cysteine 137, cysteine 143, cysteine 163, cysteine 167, cysteine 170, and serine 378. One can recognise a Radical SAM core domain in the interval 146-367 (GSDKSAATAT…RQRALDMGFL (222 aa)). Positions 395–415 (AAGTAGESVTDSKAAVDEATR) are disordered.

Belongs to the radical SAM superfamily. Lipoyl synthase family. [4Fe-4S] cluster serves as cofactor.

The protein localises to the mitochondrion. It carries out the reaction [[Fe-S] cluster scaffold protein carrying a second [4Fe-4S](2+) cluster] + N(6)-octanoyl-L-lysyl-[protein] + 2 oxidized [2Fe-2S]-[ferredoxin] + 2 S-adenosyl-L-methionine + 4 H(+) = [[Fe-S] cluster scaffold protein] + N(6)-[(R)-dihydrolipoyl]-L-lysyl-[protein] + 4 Fe(3+) + 2 hydrogen sulfide + 2 5'-deoxyadenosine + 2 L-methionine + 2 reduced [2Fe-2S]-[ferredoxin]. It participates in protein modification; protein lipoylation via endogenous pathway; protein N(6)-(lipoyl)lysine from octanoyl-[acyl-carrier-protein]: step 2/2. Its function is as follows. Catalyzes the radical-mediated insertion of two sulfur atoms into the C-6 and C-8 positions of the octanoyl moiety bound to the lipoyl domains of lipoate-dependent enzymes, thereby converting the octanoylated domains into lipoylated derivatives. The protein is Lipoyl synthase, mitochondrial of Aspergillus flavus (strain ATCC 200026 / FGSC A1120 / IAM 13836 / NRRL 3357 / JCM 12722 / SRRC 167).